A 358-amino-acid polypeptide reads, in one-letter code: Sulfoquinovosyl glycerol transport ATP-binding protein SmoE (358 aa).

The 231-residue stretch at 4–234 (VSLRKLDKSY…PESVFVGGFV (231 aa)) folds into the ABC transporter domain. 36 to 43 (GPSGCGKS) is an ATP binding site.

The protein belongs to the ABC transporter superfamily. The complex is probably composed of two ATP-binding proteins (SmoE), two transmembrane proteins (SmoG and SmoH) and a solute-binding protein (SmoF).

It localises to the cell inner membrane. Functionally, part of the ABC transporter complex SmoEFGH involved in sulfoquinovosyl glycerol (SQGro) uptake. Responsible for energy coupling to the transport system. In Agrobacterium fabrum (strain C58 / ATCC 33970) (Agrobacterium tumefaciens (strain C58)), this protein is Sulfoquinovosyl glycerol transport ATP-binding protein SmoE.